The primary structure comprises 581 residues: NADH-quinone oxidoreductase subunit C/D (581 aa).

An NADH dehydrogenase I subunit C region spans residues M1–F172. Residues E196 to R581 are NADH dehydrogenase I subunit D.

In the N-terminal section; belongs to the complex I 30 kDa subunit family. The protein in the C-terminal section; belongs to the complex I 49 kDa subunit family. In terms of assembly, NDH-1 is composed of 13 different subunits. Subunits NuoB, CD, E, F, and G constitute the peripheral sector of the complex.

Its subcellular location is the cell inner membrane. It carries out the reaction a quinone + NADH + 5 H(+)(in) = a quinol + NAD(+) + 4 H(+)(out). Its function is as follows. NDH-1 shuttles electrons from NADH, via FMN and iron-sulfur (Fe-S) centers, to quinones in the respiratory chain. The immediate electron acceptor for the enzyme in this species is believed to be ubiquinone. Couples the redox reaction to proton translocation (for every two electrons transferred, four hydrogen ions are translocated across the cytoplasmic membrane), and thus conserves the redox energy in a proton gradient. The chain is NADH-quinone oxidoreductase subunit C/D from Rhodopseudomonas palustris (strain BisB18).